Here is a 570-residue protein sequence, read N- to C-terminus: Phosphoenolpyruvate-protein phosphotransferase (570 aa).

The Tele-phosphohistidine intermediate role is filled by His189. Residues Arg296 and Arg332 each coordinate phosphoenolpyruvate. 2 residues coordinate Mg(2+): Glu431 and Asp455. Phosphoenolpyruvate is bound by residues 454–455 (ND) and Arg465. Cys502 serves as the catalytic Proton donor.

It belongs to the PEP-utilizing enzyme family. Homodimer. Mg(2+) is required as a cofactor.

It is found in the cytoplasm. It catalyses the reaction L-histidyl-[protein] + phosphoenolpyruvate = N(pros)-phospho-L-histidyl-[protein] + pyruvate. General (non sugar-specific) component of the phosphoenolpyruvate-dependent sugar phosphotransferase system (sugar PTS). This major carbohydrate active-transport system catalyzes the phosphorylation of incoming sugar substrates concomitantly with their translocation across the cell membrane. Enzyme I transfers the phosphoryl group from phosphoenolpyruvate (PEP) to the phosphoryl carrier protein (HPr). This chain is Phosphoenolpyruvate-protein phosphotransferase (ptsI), found in Buchnera aphidicola subsp. Schizaphis graminum (strain Sg).